Reading from the N-terminus, the 575-residue chain is Interleukin-10 receptor subunit alpha (575 aa).

An N-terminal signal peptide occupies residues 1–16 (MLSRLLPFLVTISSLS). The Extracellular segment spans residues 17–241 (LEFIAYGTEL…QYFTVTNLSI (225 aa)). Asparagine 50, asparagine 66, asparagine 113, and asparagine 182 each carry an N-linked (GlcNAc...) asparagine glycan. Cysteine 204 and cysteine 225 are oxidised to a cystine. N-linked (GlcNAc...) asparagine glycosylation is present at asparagine 238. Residues 242 to 262 (LVISMLLFCGILVCLVLQWYI) traverse the membrane as a helical segment. Over 263-575 (RHPGKLPTVL…PLISSLQVEE (313 aa)) the chain is Cytoplasmic. Residues tyrosine 443 and tyrosine 493 each carry the phosphotyrosine modification.

This sequence belongs to the type II cytokine receptor family. In terms of assembly, interacts with IL10. Interacts with IL10RB. Interacts (via its cytoplasmic domain) with JAK1 (via N-terminus). Interacts with BTRC; this interaction leads to IL10RA ubiquitination and subsequent degradation. Interacts with STAT3. In terms of processing, phosphorylated. Phosphorylation of the cytoplasmic tail induced STAT3 activation. Ubiquitinated by BTRC; ubiquitination leads to endocytosis and subsequent degradation of IL10RA.

The protein localises to the cell membrane. Its subcellular location is the cytoplasm. Cell surface receptor for the cytokine IL10 that participates in IL10-mediated anti-inflammatory functions, limiting excessive tissue disruption caused by inflammation. Upon binding to IL10, induces a conformational change in IL10RB, allowing IL10RB to bind IL10 as well. In turn, the heterotetrameric assembly complex, composed of two subunits of IL10RA and IL10RB, activates the kinases JAK1 and TYK2 that are constitutively associated with IL10RA and IL10RB respectively. These kinases then phosphorylate specific tyrosine residues in the intracellular domain in IL10RA leading to the recruitment and subsequent phosphorylation of STAT3. Once phosphorylated, STAT3 homodimerizes, translocates to the nucleus and activates the expression of anti-inflammatory genes. In addition, IL10RA-mediated activation of STAT3 inhibits starvation-induced autophagy. The protein is Interleukin-10 receptor subunit alpha (Il10ra) of Mus musculus (Mouse).